The chain runs to 951 residues: Exportin-2 (951 aa).

In terms of domain architecture, Importin N-terminal spans 29-104; the sequence is ATSKIQKFVK…KSLLLNFILS (76 aa).

This sequence belongs to the XPO2/CSE1 family.

The protein resides in the cytoplasm. It localises to the nucleus. Its function is as follows. Export receptor for importin alpha. Mediates importin-alpha re-export from the nucleus to the cytoplasm after import substrates have been released into the nucleoplasm. The protein is Exportin-2 (xpo2) of Dictyostelium discoideum (Social amoeba).